The following is a 333-amino-acid chain: Biotin synthase (333 aa).

In terms of domain architecture, Radical SAM core spans 51-278 (RAIQLSTLMS…KSYVRLSAGR (228 aa)). Residues C66, C70, and C73 each contribute to the [4Fe-4S] cluster site. Positions 110, 141, 201, and 273 each coordinate [2Fe-2S] cluster.

This sequence belongs to the radical SAM superfamily. Biotin synthase family. In terms of assembly, homodimer. The cofactor is [4Fe-4S] cluster. [2Fe-2S] cluster is required as a cofactor.

The enzyme catalyses (4R,5S)-dethiobiotin + (sulfur carrier)-SH + 2 reduced [2Fe-2S]-[ferredoxin] + 2 S-adenosyl-L-methionine = (sulfur carrier)-H + biotin + 2 5'-deoxyadenosine + 2 L-methionine + 2 oxidized [2Fe-2S]-[ferredoxin]. It functions in the pathway cofactor biosynthesis; biotin biosynthesis; biotin from 7,8-diaminononanoate: step 2/2. Catalyzes the conversion of dethiobiotin (DTB) to biotin by the insertion of a sulfur atom into dethiobiotin via a radical-based mechanism. In Haemophilus influenzae (strain 86-028NP), this protein is Biotin synthase.